A 505-amino-acid polypeptide reads, in one-letter code: Maturase K (505 aa).

The protein belongs to the intron maturase 2 family. MatK subfamily.

Its subcellular location is the plastid. It localises to the chloroplast. Usually encoded in the trnK tRNA gene intron. Probably assists in splicing its own and other chloroplast group II introns. This Barclaya longifolia (Orchid lily) protein is Maturase K.